The following is a 656-amino-acid chain: Protein arginine N-methyltransferase 7 (656 aa).

SAM-dependent MTase PRMT-type domains follow at residues 12–338 (EREW…FSIW) and 343–656 (GKDS…QSGN).

Belongs to the class I-like SAM-binding methyltransferase superfamily. Protein arginine N-methyltransferase family. PRMT7 subfamily.

In terms of biological role, arginine methyltransferase that can both catalyze the formation of omega-N monomethylarginine (MMA) and symmetrical dimethylarginine (sDMA). This chain is Protein arginine N-methyltransferase 7 (prmt-7), found in Caenorhabditis briggsae.